The chain runs to 293 residues: Glutamyl-Q tRNA(Asp) synthetase (293 aa).

Residues 9-13 (RFAPS) and E45 contribute to the L-glutamate site. Residues 12 to 22 (PSPSGSLHFGS) carry the 'HIGH' region motif. Zn(2+) is bound by residues C101, C103, Y115, and C119. 2 residues coordinate L-glutamate: Y172 and R190. Residues 228–232 (KLSKQ) carry the 'KMSKS' region motif. Position 231 (K231) interacts with ATP.

This sequence belongs to the class-I aminoacyl-tRNA synthetase family. GluQ subfamily. It depends on Zn(2+) as a cofactor.

Functionally, catalyzes the tRNA-independent activation of glutamate in presence of ATP and the subsequent transfer of glutamate onto a tRNA(Asp). Glutamate is transferred on the 2-amino-5-(4,5-dihydroxy-2-cyclopenten-1-yl) moiety of the queuosine in the wobble position of the QUC anticodon. This is Glutamyl-Q tRNA(Asp) synthetase from Shewanella frigidimarina (strain NCIMB 400).